Consider the following 268-residue polypeptide: Photosystem II 22 kDa protein 1, chloroplastic (268 aa).

The N-terminal 60 residues, 1-60 (MAQSMLVSGANGTVAAASTSRLQPVRPTPFSRLVLSQPSSSLGRAVSVKTVALFGRSKTK), are a transit peptide targeting the chloroplast. 2 repeat units span residues 54–161 (FGRS…FVDD) and 164–268 (VTGL…DDEE). 4 helical membrane-spanning segments follow: residues 99–119 (VAMLGFAASILGEAITGKGIL), 133–153 (AEPLLLFFILFTLLGAIGALG), 199–219 (LFVGRLAQLGIAFSIIGEIIT), and 234–254 (PINEIEPLVLFNVVFFFIAAI).

Belongs to the ELIP/psbS family. In terms of tissue distribution, expressed at low levels in leaves (at protein level).

The protein resides in the plastid. It is found in the chloroplast thylakoid membrane. In terms of biological role, involved in high light-mediated energy-dependent nonphotochemical quenching (NPQ, qE) and thermal dissipation (TD) thus regulating energy conversion in photosystem II and protecting from photoinhibition. Also seems to regulate quantum yield of electron transport in fluctuating light conditions. This chain is Photosystem II 22 kDa protein 1, chloroplastic, found in Oryza sativa subsp. indica (Rice).